The following is a 126-amino-acid chain: Arginine decarboxylase proenzyme (126 aa).

The Schiff-base intermediate with substrate; via pyruvic acid role is filled by S74. At S74 the chain carries Pyruvic acid (Ser); by autocatalysis. The active-site Proton acceptor; for processing activity is the H79. Catalysis depends on C94, which acts as the Proton donor; for catalytic activity.

Belongs to the prokaryotic AdoMetDC family. Type 1 subfamily. Heterooctamer of four alpha and four beta chains arranged as a tetramer of alpha/beta heterodimers. The cofactor is pyruvate. Post-translationally, is synthesized initially as an inactive proenzyme. Formation of the active enzyme involves a self-maturation process in which the active site pyruvoyl group is generated from an internal serine residue via an autocatalytic post-translational modification. Two non-identical subunits are generated from the proenzyme in this reaction, and the pyruvate is formed at the N-terminus of the alpha chain, which is derived from the carboxyl end of the proenzyme. The post-translation cleavage follows an unusual pathway, termed non-hydrolytic serinolysis, in which the side chain hydroxyl group of the serine supplies its oxygen atom to form the C-terminus of the beta chain, while the remainder of the serine residue undergoes an oxidative deamination to produce ammonia and the pyruvoyl group blocking the N-terminus of the alpha chain.

It catalyses the reaction L-arginine + H(+) = agmatine + CO2. Its pathway is amine and polyamine biosynthesis; agmatine biosynthesis; agmatine from L-arginine: step 1/1. In terms of biological role, specifically catalyzes the decarboxylation of L-arginine to agmatine. Has no S-adenosylmethionine decarboxylase (AdoMetDC) activity. This chain is Arginine decarboxylase proenzyme, found in Pyrobaculum aerophilum (strain ATCC 51768 / DSM 7523 / JCM 9630 / CIP 104966 / NBRC 100827 / IM2).